Consider the following 453-residue polypeptide: Na(+)/H(+) antiporter NhaA 2 (453 aa).

12 helical membrane passes run Phe23 to Ile43, Leu74 to Ile94, Leu111 to Gly131, Gly139 to Gly159, Val168 to Phe188, Gly191 to Leu211, Ile214 to Leu234, Leu235 to Ala255, Val316 to Val336, Trp345 to Val365, Ile386 to Leu406, and Leu419 to Ser439.

It belongs to the NhaA Na(+)/H(+) (TC 2.A.33) antiporter family.

The protein resides in the cell inner membrane. The enzyme catalyses Na(+)(in) + 2 H(+)(out) = Na(+)(out) + 2 H(+)(in). Functionally, na(+)/H(+) antiporter that extrudes sodium in exchange for external protons. In Pseudomonas putida (strain ATCC 47054 / DSM 6125 / CFBP 8728 / NCIMB 11950 / KT2440), this protein is Na(+)/H(+) antiporter NhaA 2.